A 266-amino-acid chain; its full sequence is Glucosamine-6-phosphate deaminase (266 aa).

Catalysis depends on Asp-72, which acts as the Proton acceptor; for enolization step. Asp-141 functions as the For ring-opening step in the catalytic mechanism. The active-site Proton acceptor; for ring-opening step is the His-143. The active-site For ring-opening step is Glu-148.

The protein belongs to the glucosamine/galactosamine-6-phosphate isomerase family. NagB subfamily. In terms of assembly, homohexamer.

It catalyses the reaction alpha-D-glucosamine 6-phosphate + H2O = beta-D-fructose 6-phosphate + NH4(+). It functions in the pathway amino-sugar metabolism; N-acetylneuraminate degradation; D-fructose 6-phosphate from N-acetylneuraminate: step 5/5. Its activity is regulated as follows. Allosterically activated by N-acetylglucosamine 6-phosphate (GlcNAc6P). Catalyzes the reversible isomerization-deamination of glucosamine 6-phosphate (GlcN6P) to form fructose 6-phosphate (Fru6P) and ammonium ion. The polypeptide is Glucosamine-6-phosphate deaminase (Vibrio vulnificus (strain CMCP6)).